The primary structure comprises 360 residues: MSSSETKGRNEEDVAEIKKAIATGAVKDPSNLSAIPPIFVVSGANFSMNFLLLCIQSSVCCACVFAVKKLGIISFRDFDMKDAKMWFPISFLLVSVIYTGSKSLQYLSIPVYTIFKNLTIILIAYGEVLWFGGRVTALTFVSFIFMVISSIIAAWSDVQSALASSIPGASSGVSVGAMQSLFGALRGLNVGYFWMLVNCLTSAAYVLSMRKRIKSTGFSDWDTMFYNNLLSIPVLAVFSLIAEDWGRENLNRNFPAETRNFLLFAIAFSGAAAVGISYTTAWCVRVTSSTTYSMVGALNKLPVAASGMLFFGDPVTVGSVSAVGVGFFAGIVYAVAKNNQKKNERRQAADAIIPMASRKP.

Residues Met1–Asn49 are Cytoplasmic-facing. Residues Phe50–Val67 traverse the membrane as a helical segment. Residues Lys68–Lys84 are Lumenal-facing. A helical membrane pass occupies residues Met85–Gln105. At Tyr106 to Pro110 the chain is on the cytoplasmic side. A helical membrane pass occupies residues Val111 to Phe131. Residues Gly132–Arg134 are Lumenal-facing. A helical transmembrane segment spans residues Val135–Trp155. The Cytoplasmic portion of the chain corresponds to Ser156 to Ser164. A helical membrane pass occupies residues Ser165 to Leu185. Residue Arg186 is a topological domain, lumenal. A helical transmembrane segment spans residues Gly187–Leu207. The Cytoplasmic segment spans residues Ser208–Asp220. The helical transmembrane segment at Trp221–Ile241 threads the bilayer. The Lumenal segment spans residues Ala242–Asn260. A helical membrane pass occupies residues Phe261–Ala281. Over Trp282 to Thr291 the chain is Cytoplasmic. Residues Tyr292 to Gly312 traverse the membrane as a helical segment. At Asp313–Pro314 the chain is on the lumenal side. Residues Val315–Val335 traverse the membrane as a helical segment. Residues Ala336–Pro360 are Cytoplasmic-facing.

The protein belongs to the TPT transporter family. SLC35D subfamily. In terms of assembly, homooligomer.

The protein localises to the golgi apparatus membrane. The protein resides in the cytoplasmic vesicle membrane. It is found in the endoplasmic reticulum membrane. Its function is as follows. Involved in the import of GDP-mannose from the cytoplasm into the Golgi lumen. In Coprinopsis cinerea (strain Okayama-7 / 130 / ATCC MYA-4618 / FGSC 9003) (Inky cap fungus), this protein is GDP-mannose transporter (VRG4).